A 161-amino-acid polypeptide reads, in one-letter code: Small ribosomal subunit protein eS6 (161 aa).

Residues 119 to 161 (VLLGEEEPEDADDDGDSDVDADEATDTDAGSEEDNDDDIADAE) are disordered. The span at 122–161 (GEEEPEDADDDGDSDVDADEATDTDAGSEEDNDDDIADAE) shows a compositional bias: acidic residues.

The protein belongs to the eukaryotic ribosomal protein eS6 family.

The sequence is that of Small ribosomal subunit protein eS6 from Haloquadratum walsbyi (strain DSM 16790 / HBSQ001).